Here is a 337-residue protein sequence, read N- to C-terminus: METEPPPLEERRRLQEELSEFVESCCRTLEEVTASLGWSLDQLDPGDEAEAEDEIAICPYDSNHRMPKSSLTKHMESCRLRKLGYTKEEENEMYNPTFFYENLKIPSVTLNKDSQFQIIKQARTTAGKDGDCYSQRMYSSVPVEVPLNHKRSVCDLTQTDRLALYDFVIEETKKKRSGPQVIENDSDLFVDLAAKVNQDNSRKSPKSYLEILAEVRDYKRRRQSYRAKNVHITKKSYTEVIRDVIKVHMEELSSHWQEEQGRAGDAAEKNEERRSASVDSRQSGGSYLDVESSRHRRARSRSPHKRKRNKDKSSESRRRKERDGERHHSHKRRKQKI.

The CHHC U11-48K-type zinc finger occupies 55–82 (IAICPYDSNHRMPKSSLTKHMESCRLRK). Zn(2+) is bound by residues cysteine 58, histidine 64, histidine 74, and cysteine 78. Residues lysine 87 and lysine 104 each participate in a glycyl lysine isopeptide (Lys-Gly) (interchain with G-Cter in SUMO2) cross-link. Positions 255-276 (HWQEEQGRAGDAAEKNEERRSA) are enriched in basic and acidic residues. Residues 255–337 (HWQEEQGRAG…HSHKRRKQKI (83 aa)) form a disordered region. Residues 294 to 310 (RHRRARSRSPHKRKRNK) are compositionally biased toward basic residues. A compositionally biased stretch (basic and acidic residues) spans 311–326 (DKSSESRRRKERDGER). Over residues 327 to 337 (HHSHKRRKQKI) the composition is skewed to basic residues.

As to quaternary structure, component of the U11/U12 snRNPs that are part of the U12-type spliceosome. Not found in the major spliceosome.

The protein resides in the nucleus. Likely involved in U12-type 5' splice site recognition. The protein is U11/U12 small nuclear ribonucleoprotein 48 kDa protein (Snrnp48) of Mus musculus (Mouse).